The sequence spans 30 residues: Non-toxic phospholipase A2 (30 aa).

Positions 26, 28, and 30 each coordinate Ca(2+).

Belongs to the phospholipase A2 family. Group I subfamily. In terms of assembly, homodimer. The cofactor is Ca(2+). Post-translationally, glycosylated. As to expression, expressed by the venom gland.

The protein resides in the secreted. The enzyme catalyses a 1,2-diacyl-sn-glycero-3-phosphocholine + H2O = a 1-acyl-sn-glycero-3-phosphocholine + a fatty acid + H(+). Enzymatic activity is diminished by Cd(2+) and Hg(2+). Its function is as follows. Relatively highly potent phospholipase A2 that displays potent antimicrobial and hemolytic activities. It does not show cytotoxic effects on the three human cell lines tested. PLA2 catalyzes the calcium-dependent hydrolysis of the 2-acyl groups in 3-sn-phosphoglycerides. It shows similar potencies on both Gram-negative and Gram-positive bacteria: B.cereus (MIC&gt;9 ug/ml), B.subtilis (MIC&gt;12 ug/ml), E.faecalis (MIC&gt;7 ug/ml), S.epidermidis (MIC&gt;12 ug/ml), S.aureux (MIC&gt;5 ug/ml), E.coli (MIC&gt;7 ug/ml), K.pneumonia (MIC&gt;8 ug/ml), P.aeruginosa (MIC&gt;10 ug/ml), and S.enteric (MIC&gt;9 ug/ml). It also shows antifungal activities: A.niger (MIC&gt;15 ug/ml), B.cinerea (MIC&gt;12 ug/ml), F.solani (MIC&gt;15 ug/ml), and P.digitatum (MIC&gt;10 ug/ml). The polypeptide is Non-toxic phospholipase A2 (Walterinnesia aegyptia (Desert black snake)).